Here is a 346-residue protein sequence, read N- to C-terminus: MSLLKDSTVAVITGTSSNLGFNIAVRLLEGLPDNKEITLVVTSRTLPKVKEVISDIKKYIVAKIPTKVNKVEFDYLLVDFTDMVSILSAYYELNKRYKHIDYLFINAAQGVYGGIDWTGAVLEVLQSPIEAVTNPTYKLQKVGVESGDKLGLVFQANVFGPYYFIHRIKHLLENGGKIVWVSSLMSSPKYLSFNDLQLLRSPASYEGSKRLVDLMHFGTYNKLEREHGIKQYLVHPGIFTSFSFFQYLNVFTYYGMLFLFYLARFLGSPYHNISGYIAANAPVAAALGQTKQNCKTASACTRSGKEYLLEEEIDSTGSDDVVSYLDTLTKEWDEKLKDQIVNTRQP.

Residues Leu19, Thr42, and Lys48 each contribute to the NADP(+) site. Catalysis depends on proton donor residues Ser182 and Tyr205. Tyr205, Lys209, and Ser241 together coordinate NADP(+). The active-site Lowers pKa of active site Tyr is the Lys209. A helical membrane pass occupies residues 242 to 262 (FSFFQYLNVFTYYGMLFLFYL). N-linked (GlcNAc...) asparagine glycosylation occurs at Asn272.

This sequence belongs to the short-chain dehydrogenases/reductases (SDR) family. ERG27 subfamily. In terms of assembly, heterotetramer of ERG25, ERG26, ERG27 and ERG28. ERG28 acts as a scaffold to tether ERG27 and other 4,4-demethylation-related enzymes, forming a demethylation enzyme complex, in the endoplasmic reticulum. Interacts with ERG25 and ERG28. Also interacts with ERG7, but only in lipid particles.

Its subcellular location is the endoplasmic reticulum membrane. It localises to the lipid droplet. The enzyme catalyses 3-dehydro-4alpha-methylzymosterol + NADPH + H(+) = 4alpha-methylzymosterol + NADP(+). It functions in the pathway steroid biosynthesis; zymosterol biosynthesis; zymosterol from lanosterol: step 5/6. 3-keto-steroid reductase; part of the third module of ergosterol biosynthesis pathway that includes the late steps of the pathway. ERG27 is a catalytic component of the C-4 demethylation complex that catalyzes the reduction of the keto group on the C-3. The third module or late pathway involves the ergosterol synthesis itself through consecutive reactions that mainly occur in the endoplasmic reticulum (ER) membrane. Firstly, the squalene synthase ERG9 catalyzes the condensation of 2 farnesyl pyrophosphate moieties to form squalene, which is the precursor of all steroids. Squalene synthase is crucial for balancing the incorporation of farnesyl diphosphate (FPP) into sterol and nonsterol isoprene synthesis. Secondly, the squalene epoxidase ERG1 catalyzes the stereospecific oxidation of squalene to (S)-2,3-epoxysqualene, which is considered to be a rate-limiting enzyme in steroid biosynthesis. Then, the lanosterol synthase ERG7 catalyzes the cyclization of (S)-2,3 oxidosqualene to lanosterol, a reaction that forms the sterol core. In the next steps, lanosterol is transformed to zymosterol through a complex process involving various demethylation, reduction and desaturation reactions. The lanosterol 14-alpha-demethylase ERG11 (also known as CYP51) catalyzes C14-demethylation of lanosterol to produce 4,4'-dimethyl cholesta-8,14,24-triene-3-beta-ol, which is critical for ergosterol biosynthesis. The C-14 reductase ERG24 reduces the C14=C15 double bond of 4,4-dimethyl-cholesta-8,14,24-trienol to produce 4,4-dimethyl-cholesta-8,24-dienol. 4,4-dimethyl-cholesta-8,24-dienol is substrate of the C-4 demethylation complex ERG25-ERG26-ERG27 in which ERG25 catalyzes the three-step monooxygenation required for the demethylation of 4,4-dimethyl and 4alpha-methylsterols, ERG26 catalyzes the oxidative decarboxylation that results in a reduction of the 3-beta-hydroxy group at the C-3 carbon to an oxo group, and ERG27 is responsible for the reduction of the keto group on the C-3. ERG28 has a role as a scaffold to help anchor ERG25, ERG26 and ERG27 to the endoplasmic reticulum and ERG29 regulates the activity of the iron-containing C4-methylsterol oxidase ERG25. Then, the sterol 24-C-methyltransferase ERG6 catalyzes the methyl transfer from S-adenosyl-methionine to the C-24 of zymosterol to form fecosterol. The C-8 sterol isomerase ERG2 catalyzes the reaction which results in unsaturation at C-7 in the B ring of sterols and thus converts fecosterol to episterol. The sterol-C5-desaturase ERG3 then catalyzes the introduction of a C-5 double bond in the B ring to produce 5-dehydroepisterol. The C-22 sterol desaturase ERG5 further converts 5-dehydroepisterol into ergosta-5,7,22,24(28)-tetraen-3beta-ol by forming the C-22(23) double bond in the sterol side chain. Finally, ergosta-5,7,22,24(28)-tetraen-3beta-ol is substrate of the C-24(28) sterol reductase ERG4 to produce ergosterol. In terms of biological role, facilitates the association of ERG7 with lipid particles preventing its digestion in the endoplasmic reticulum and the lipid particles. This Candida albicans (strain SC5314 / ATCC MYA-2876) (Yeast) protein is 3-keto-steroid reductase ERG27.